Consider the following 495-residue polypeptide: Mesoderm induction early response protein 1 (495 aa).

Disordered regions lie at residues 1 to 25 and 76 to 131; these read MAEP…FEPS and GSTV…PSFT. The segment covering 83 to 94 has biased composition (acidic residues); it reads GEEEEDEEDMDN. Residues 120–130 show a composition bias toward polar residues; that stretch reads QSSNDDPTPSF. The 99-residue stretch at 171–269 folds into the ELM2 domain; the sequence is KEIMVGSMFQ…EALRRLRFNV (99 aa). The 53-residue stretch at 274 to 326 folds into the SANT domain; sequence EELSVWTEEECRNFEQGLKAYGKDFHLIQANKVRTRSVGECVAFYYMWKKSER. 2 disordered regions span residues 356–397 and 416–495; these read DESE…NGVS and HLNG…HGEV. Composition is skewed to polar residues over residues 387–397 and 420–440; these read TASNNTQNGVS and PTIS…YNRE. Positions 462–476 are enriched in basic and acidic residues; sequence TNERPIKRQRMDSPG. Polar residues predominate over residues 477–489; it reads KESTGSSEFSQEV.

It is found in the nucleus. Functionally, transcriptional repressor regulating the expression of a number of genes. Probably functions through recruitment of histone deacetylases involved in chromatin silencing. This Xenopus laevis (African clawed frog) protein is Mesoderm induction early response protein 1 (mier1).